Here is a 212-residue protein sequence, read N- to C-terminus: ATP phosphoribosyltransferase (212 aa).

It belongs to the ATP phosphoribosyltransferase family. Short subfamily. In terms of assembly, heteromultimer composed of HisG and HisZ subunits.

Its subcellular location is the cytoplasm. It catalyses the reaction 1-(5-phospho-beta-D-ribosyl)-ATP + diphosphate = 5-phospho-alpha-D-ribose 1-diphosphate + ATP. The protein operates within amino-acid biosynthesis; L-histidine biosynthesis; L-histidine from 5-phospho-alpha-D-ribose 1-diphosphate: step 1/9. Functionally, catalyzes the condensation of ATP and 5-phosphoribose 1-diphosphate to form N'-(5'-phosphoribosyl)-ATP (PR-ATP). Has a crucial role in the pathway because the rate of histidine biosynthesis seems to be controlled primarily by regulation of HisG enzymatic activity. The polypeptide is ATP phosphoribosyltransferase (Clostridium novyi (strain NT)).